A 239-amino-acid chain; its full sequence is Ribonuclease HII (239 aa).

The RNase H type-2 domain maps to 18-231 (KIIVGLDEAG…SKNLLKEIEE (214 aa)). A divalent metal cation-binding residues include Asp-24, Glu-25, and Asp-125.

It belongs to the RNase HII family. Mn(2+) is required as a cofactor. Mg(2+) serves as cofactor.

Its subcellular location is the cytoplasm. It carries out the reaction Endonucleolytic cleavage to 5'-phosphomonoester.. Its function is as follows. Endonuclease that specifically degrades the RNA of RNA-DNA hybrids. The chain is Ribonuclease HII from Methanococcus maripaludis (strain C7 / ATCC BAA-1331).